The primary structure comprises 930 residues: Alanine--tRNA ligase (930 aa).

Zn(2+) is bound by residues H595, H599, C700, and H704.

Belongs to the class-II aminoacyl-tRNA synthetase family. The cofactor is Zn(2+).

It is found in the cytoplasm. It catalyses the reaction tRNA(Ala) + L-alanine + ATP = L-alanyl-tRNA(Ala) + AMP + diphosphate. Catalyzes the attachment of alanine to tRNA(Ala) in a two-step reaction: alanine is first activated by ATP to form Ala-AMP and then transferred to the acceptor end of tRNA(Ala). Also edits incorrectly charged Ser-tRNA(Ala) and Gly-tRNA(Ala) via its editing domain. The protein is Alanine--tRNA ligase of Malacoplasma penetrans (strain HF-2) (Mycoplasma penetrans).